An 856-amino-acid chain; its full sequence is MRVKGIRRNCQHLWIWGTMLFGMWMICSAVEQLWVTVYYGVPVWKEATTTLFCASDAKAYSTEAHKVWATHACVPTNPNPQEVVLENVTENFNMWKNNMVEQMHEDIISLWDQSLKPCVKLTPLCVTLNCIDKNITDWENKTIIGGGEVKNCSFNITTSIRDKVHKEYALFYKLDVVPIKSNNDSSTYTRYRLIHCNTSVITQACSKVSFEPIPIHYCAPAGFAILKCNDKKFNGTGPCTNVSTVQCTHGIRPVVSTQLLLNGSLAEEEIVIRSENFTDNAKTIIVHLNESVEINCTRPNNNVRRRHIHIGPGRAFYTGEIRGNIRQAHCNISRAKWNNTLKQIVEKLREQFKNKTIVFNHSSGGDPEIVTHSFNCGGEFFYCDSTQLFNSTWNVTGISTEGNNNTEENGDTITLPCRIKQIINMWQGVGKAMYAPPIGGQIRCSSNITGLLLTRDGGNSSSREEIFRPGGGNMRDNWRSELYKYKVVKIEPLGVAPTKAKRRVVQREKRAVGAIGAMFLGFLGAAGSTMGAASLTLTVQARQLLSGIVQQQNNLLRAIEAQQHLLQLTVWGIKQLQARVLAVERYLRDQQLLGIWGCSGKLICTTTVPWNASWSNKSMDQIWNNMTWMEWEREIDNYTSLIYNLIEESQNQQEKNEQELLELDKWASLWNWFSITNWLWYIKIFIMIVGGLVGLRIVFSVLSIVNRVRQGYSPLSFQTHLPTPRGPDRPEGTEEEGGERDRDRSVRLVHGFLALIWDDLRSLCLFSYHRLRDLLLIVTRIVELLGRRGWEALKYWWNLLQYWSKELKNSAVGLLNAIAIAVAEGTDRVIEVVQRICRAIIHIPRRIRQGLERALL.

A signal peptide spans 1–31 (MRVKGIRRNCQHLWIWGTMLFGMWMICSAVE). The Extracellular segment spans residues 32-684 (QLWVTVYYGV…ITNWLWYIKI (653 aa)). The cysteines at positions 53 and 73 are disulfide-linked. Residues N87, N134, N140, N151, N155, N183, N197, N234, N241, N262, N276, N289, and N295 are each glycosylated (N-linked (GlcNAc...) asparagine; by host). Intrachain disulfides connect C118-C205, C125-C196, C130-C152, C218-C247, and C228-C239. The V1 stretch occupies residues 130-151 (CIDKNITDWENKTIIGGGEVKN). Positions 152–196 (CSFNITTSIRDKVHKEYALFYKLDVVPIKSNNDSSTYTRYRLIHC) are V2. A V3 region spans residues 296–329 (CTRPNNNVRRRHIHIGPGRAFYTGEIRGNIRQAH). C296 and C330 are oxidised to a cystine. N-linked (GlcNAc...) asparagine; by host glycans are attached at residues N331, N338, N354, and N360. Residues 362–372 (SSGGDPEIVTH) are CD4-binding loop. Intrachain disulfides connect C376-C444 and C383-C417. Residues 383–417 (CDSTQLFNSTWNVTGISTEGNNNTEENGDTITLPC) are V4. N-linked (GlcNAc...) asparagine; by host glycans are attached at residues N390, N394, N404, N447, and N459. V5 regions lie at residues 460–470 (SSSREEIFRPG) and 462–470 (SREEIFRPG). Residues 511 to 532 (AVGAIGAMFLGFLGAAGSTMGA) are fusion peptide. The immunosuppression stretch occupies residues 574–592 (KQLQARVLAVERYLRDQQL). C598 and C604 are disulfide-bonded. Residues N611, N616, N625, and N637 are each glycosylated (N-linked (GlcNAc...) asparagine; by host). Residues 633–667 (REIDNYTSLIYNLIEESQNQQEKNEQELLELDKWA) adopt a coiled-coil conformation. Residues 662–683 (ELDKWASLWNWFSITNWLWYIK) form an MPER; binding to GalCer region. The helical transmembrane segment at 685–705 (FIMIVGGLVGLRIVFSVLSIV) threads the bilayer. At 706 to 856 (NRVRQGYSPL…IRQGLERALL (151 aa)) the chain is on the cytoplasmic side. The short motif at 712–715 (YSPL) is the YXXL motif; contains endocytosis signal element. The interval 716-742 (SFQTHLPTPRGPDRPEGTEEEGGERDR) is disordered. S-palmitoyl cysteine; by host attachment occurs at residues C764 and C837. Residues 855–856 (LL) carry the Di-leucine internalization motif motif.

The protein belongs to the HIV-1 env protein family. The mature envelope protein (Env) consists of a homotrimer of non-covalently associated gp120-gp41 heterodimers. The resulting complex protrudes from the virus surface as a spike. There seems to be as few as 10 spikes on the average virion. Interacts with host CD4, CCR5 and CXCR4. Gp120 also interacts with the C-type lectins CD209/DC-SIGN and CLEC4M/DC-SIGNR (collectively referred to as DC-SIGN(R)). Gp120 and gp41 interact with GalCer. Gp120 interacts with host ITGA4/ITGB7 complex; on CD4+ T-cells, this interaction results in rapid activation of integrin ITGAL/LFA-1, which facilitates efficient cell-to-cell spreading of HIV-1. Gp120 interacts with cell-associated heparan sulfate; this interaction increases virus infectivity on permissive cells and may be involved in infection of CD4- cells. As to quaternary structure, the mature envelope protein (Env) consists of a homotrimer of non-covalently associated gp120-gp41 heterodimers. The resulting complex protrudes from the virus surface as a spike. There seems to be as few as 10 spikes on the average virion. Highly glycosylated by host. The high number of glycan on the protein is reffered to as 'glycan shield' because it contributes to hide protein sequence from adaptive immune system. In terms of processing, palmitoylation of the transmembrane protein and of Env polyprotein (prior to its proteolytic cleavage) is essential for their association with host cell membrane lipid rafts. Palmitoylation is therefore required for envelope trafficking to classical lipid rafts, but not for viral replication. Post-translationally, specific enzymatic cleavages in vivo yield mature proteins. Envelope glycoproteins are synthesized as an inactive precursor that is heavily N-glycosylated and processed likely by host cell furin in the Golgi to yield the mature SU and TM proteins. The cleavage site between SU and TM requires the minimal sequence [KR]-X-[KR]-R. About 2 of the 9 disulfide bonds of gp41 are reduced by P4HB/PDI, following binding to CD4 receptor.

The protein localises to the virion membrane. It localises to the host cell membrane. The protein resides in the host endosome membrane. Functionally, oligomerizes in the host endoplasmic reticulum into predominantly trimers. In a second time, gp160 transits in the host Golgi, where glycosylation is completed. The precursor is then proteolytically cleaved in the trans-Golgi and thereby activated by cellular furin or furin-like proteases to produce gp120 and gp41. Its function is as follows. Attaches the virus to the host lymphoid cell by binding to the primary receptor CD4. This interaction induces a structural rearrangement creating a high affinity binding site for a chemokine coreceptor like CXCR4 and/or CCR5. Acts as a ligand for CD209/DC-SIGN and CLEC4M/DC-SIGNR, which are respectively found on dendritic cells (DCs), and on endothelial cells of liver sinusoids and lymph node sinuses. These interactions allow capture of viral particles at mucosal surfaces by these cells and subsequent transmission to permissive cells. HIV subverts the migration properties of dendritic cells to gain access to CD4+ T-cells in lymph nodes. Virus transmission to permissive T-cells occurs either in trans (without DCs infection, through viral capture and transmission), or in cis (following DCs productive infection, through the usual CD4-gp120 interaction), thereby inducing a robust infection. In trans infection, bound virions remain infectious over days and it is proposed that they are not degraded, but protected in non-lysosomal acidic organelles within the DCs close to the cell membrane thus contributing to the viral infectious potential during DCs' migration from the periphery to the lymphoid tissues. On arrival at lymphoid tissues, intact virions recycle back to DCs' cell surface allowing virus transmission to CD4+ T-cells. Acts as a class I viral fusion protein. Under the current model, the protein has at least 3 conformational states: pre-fusion native state, pre-hairpin intermediate state, and post-fusion hairpin state. During fusion of viral and target intracellular membranes, the coiled coil regions (heptad repeats) assume a trimer-of-hairpins structure, positioning the fusion peptide in close proximity to the C-terminal region of the ectodomain. The formation of this structure appears to drive apposition and subsequent fusion of viral and target cell membranes. Complete fusion occurs in host cell endosomes and is dynamin-dependent, however some lipid transfer might occur at the plasma membrane. The virus undergoes clathrin-dependent internalization long before endosomal fusion, thus minimizing the surface exposure of conserved viral epitopes during fusion and reducing the efficacy of inhibitors targeting these epitopes. Membranes fusion leads to delivery of the nucleocapsid into the cytoplasm. This Homo sapiens (Human) protein is Envelope glycoprotein gp160.